A 200-amino-acid polypeptide reads, in one-letter code: ATP-dependent Clp protease proteolytic subunit (200 aa).

Catalysis depends on Ser103, which acts as the Nucleophile. Residue His128 is part of the active site.

Belongs to the peptidase S14 family. In terms of assembly, fourteen ClpP subunits assemble into 2 heptameric rings which stack back to back to give a disk-like structure with a central cavity, resembling the structure of eukaryotic proteasomes.

It is found in the cytoplasm. It catalyses the reaction Hydrolysis of proteins to small peptides in the presence of ATP and magnesium. alpha-casein is the usual test substrate. In the absence of ATP, only oligopeptides shorter than five residues are hydrolyzed (such as succinyl-Leu-Tyr-|-NHMec, and Leu-Tyr-Leu-|-Tyr-Trp, in which cleavage of the -Tyr-|-Leu- and -Tyr-|-Trp bonds also occurs).. In terms of biological role, cleaves peptides in various proteins in a process that requires ATP hydrolysis. Has a chymotrypsin-like activity. Plays a major role in the degradation of misfolded proteins. In Vibrio parahaemolyticus serotype O3:K6 (strain RIMD 2210633), this protein is ATP-dependent Clp protease proteolytic subunit.